The sequence spans 148 residues: Extracellular globin-2B (148 aa).

The Globin domain maps to 3-148 (CCSAADRHEV…IADVIKAELP (146 aa)). Cysteine 4 and cysteine 135 are oxidised to a cystine. Histidine 98 contributes to the heme b binding site.

The protein belongs to the globin family. In terms of assembly, disulfide bonded trimer of chains IIA, IIB, and IIC.

The protein localises to the secreted. This Tylorrhynchus heterochetus (Japanese palolo worm) protein is Extracellular globin-2B.